Reading from the N-terminus, the 325-residue chain is Olfactory receptor 14L1 (325 aa).

Topologically, residues 1–43 (MAQFNKNQLIACRRNGTTTSDFNQTEVAEFFLMGFSNSWDIQI) are extracellular. Residues 44–64 (VHAALFFLVYLAAVIGNLLII) form a helical membrane-spanning segment. At 65–72 (ILTTLDVH) the chain is on the cytoplasmic side. A helical membrane pass occupies residues 73–93 (LQTPMYFFLRNLSFLDFCYIS). Over 94–117 (VTIPKSIVSSLTHDTSISFFGCAL) the chain is Extracellular. The helical transmembrane segment at 118-138 (QAFFFMDLATTEVAILTVMSY) threads the bilayer. The Cytoplasmic portion of the chain corresponds to 139 to 151 (DRYMAICRPLHYE). The helical transmembrane segment at 152–172 (VIINQGVCLRMMAMSWLSGVI) threads the bilayer. Over 173–214 (CGFMHVIATFSLPFCGRNRIRQFFCNIPQLLSLLDPKVITIE) the chain is Extracellular. The chain crosses the membrane as a helical span at residues 215–235 (IGVMVFGTSLVIISFVVITLS). At 236-255 (YMYIFSVIMRIPSKEGRSKT) the chain is on the cytoplasmic side. The helical transmembrane segment at 256–276 (FSTCIPHLVVVTLFMISGSIA) threads the bilayer. Residues 277–289 (YVKPISNSPPVLD) lie on the Extracellular side of the membrane. Residues 290–310 (VFLSAFYTVVPPTLNPVIYSL) form a helical membrane-spanning segment. Topologically, residues 311-325 (RNRDMKAALRRQCGP) are cytoplasmic.

Belongs to the G-protein coupled receptor 1 family.

Its subcellular location is the cell membrane. Odorant receptor. In Homo sapiens (Human), this protein is Olfactory receptor 14L1.